Consider the following 454-residue polypeptide: UDP-N-acetylmuramoylalanine--D-glutamate ligase (454 aa).

119-125 (GSNGKTT) contacts ATP.

It belongs to the MurCDEF family.

It localises to the cytoplasm. The catalysed reaction is UDP-N-acetyl-alpha-D-muramoyl-L-alanine + D-glutamate + ATP = UDP-N-acetyl-alpha-D-muramoyl-L-alanyl-D-glutamate + ADP + phosphate + H(+). The protein operates within cell wall biogenesis; peptidoglycan biosynthesis. Functionally, cell wall formation. Catalyzes the addition of glutamate to the nucleotide precursor UDP-N-acetylmuramoyl-L-alanine (UMA). This is UDP-N-acetylmuramoylalanine--D-glutamate ligase from Latilactobacillus sakei subsp. sakei (strain 23K) (Lactobacillus sakei subsp. sakei).